Reading from the N-terminus, the 677-residue chain is L-type lectin-domain containing receptor kinase IV.2 (677 aa).

The N-terminal stretch at 1-22 (MFVKLKLIFFFFLLCQIMISSS) is a signal peptide. Residues 23–291 (QNLNFTYNGF…EPRRISEFYK (269 aa)) lie on the Extracellular side of the membrane. A legume-lectin like region spans residues 24–262 (NLNFTYNGFH…EHFLVGWSFR (239 aa)). 8 N-linked (GlcNAc...) asparagine glycosylation sites follow: Asn-26, Asn-57, Asn-81, Asn-128, Asn-134, Asn-171, Asn-186, and Asn-203. The chain crosses the membrane as a helical span at residues 292-312 (IGMPLISLSLIFSIIFLAFYI). At 313-677 (VRRKKKYEEE…IADSLLSGGR (365 aa)) the chain is on the cytoplasmic side. The 279-residue stretch at 347-625 (FKEKDLLGSG…LQYLRGDMAL (279 aa)) folds into the Protein kinase domain. Residues 353–361 (LGSGGFGRV) and Lys-376 contribute to the ATP site. Asp-472 (proton acceptor) is an active-site residue.

The protein in the C-terminal section; belongs to the protein kinase superfamily. Ser/Thr protein kinase family. This sequence in the N-terminal section; belongs to the leguminous lectin family.

The protein localises to the cell membrane. The catalysed reaction is L-seryl-[protein] + ATP = O-phospho-L-seryl-[protein] + ADP + H(+). It catalyses the reaction L-threonyl-[protein] + ATP = O-phospho-L-threonyl-[protein] + ADP + H(+). In terms of biological role, required during pollen development. Functionally, involved in resistance response to the pathogenic bacteria Pseudomonas syringae. This is L-type lectin-domain containing receptor kinase IV.2 from Arabidopsis thaliana (Mouse-ear cress).